The chain runs to 1177 residues: Zinc finger CCCH domain-containing protein 6 (1177 aa).

Residues 1-12 (MTDSEHAGHDRE) are compositionally biased toward basic and acidic residues. 2 disordered regions span residues 1 to 137 (MTDS…SKEY) and 179 to 206 (QESS…TEYR). A compositionally biased stretch (acidic residues) spans 13–31 (DGELEDGEIDDAGFEETQD). The stretch at 27–73 (EETQDQEAKENEKQKNEKAYRKSRKKHKKEREKKKSKRRKHEKHKHN) forms a coiled coil. Residues 32–46 (QEAKENEKQKNEKAY) show a composition bias toward basic and acidic residues. Residues 47–73 (RKSRKKHKKEREKKKSKRRKHEKHKHN) show a composition bias toward basic residues. A compositionally biased stretch (low complexity) spans 179–188 (QESSGSSFSK). 3 C3H1-type zinc fingers span residues 271–297 (KGKQ…HDAE), 299–326 (EKKK…HSEF), and 327–350 (PCKF…HDDL). Positions 347–383 (HDDLTKETRKLLDKVLNADEELVNEDERELEELRKRG) form a coiled coil. Disordered stretches follow at residues 383-416 (GITP…FETD), 446-587 (PPAF…ESMQ), 622-654 (QQQP…SASG), 670-767 (RYQE…KKPH), 780-826 (PKKL…SERE), 942-988 (EQSG…SSRS), 1043-1101 (DPRD…PVDG), and 1132-1162 (LLRP…DKPL). The segment covering 493–502 (HPGSPGHHPC) has biased composition (low complexity). Composition is skewed to polar residues over residues 512–522 (ENPSLLPSSSE) and 564–587 (SSPA…ESMQ). Positions 713–728 (RTLQKQTGTLRNQQLP) are enriched in polar residues. The segment covering 753 to 767 (PRLRTVPRQDIKKPH) has biased composition (basic and acidic residues). Positions 955–967 (GDPRLQKNFDPRL) are enriched in basic and acidic residues. Polar residues-rich tracts occupy residues 1050 to 1064 (LSAT…GENT) and 1077 to 1093 (KNQP…NTTA). Ser1150 bears the Phosphoserine mark.

This Mus musculus (Mouse) protein is Zinc finger CCCH domain-containing protein 6 (Zc3h6).